A 175-amino-acid polypeptide reads, in one-letter code: Thioredoxin M-type, chloroplastic (175 aa).

The N-terminal 62 residues, 1–62, are a transit peptide targeting the chloroplast; that stretch reads MALETCLRGW…ARRPSRFVCK (62 aa). The region spanning 63-174 is the Thioredoxin domain; that stretch reads CKNVVDEVIV…LCTIIDKYIG (112 aa). Cysteine 98 and cysteine 101 are oxidised to a cystine.

The protein belongs to the thioredoxin family. Plant M-type subfamily. Forms a complex with heterodimeric ferredoxin-thioredoxin reductase (FTR) and ferredoxin.

The protein localises to the plastid. The protein resides in the chloroplast. Its function is as follows. Participates in various redox reactions through the reversible oxidation of the active center dithiol to a disulfide. The M form is known to activate NADP-malate dehydrogenase. This Triticum aestivum (Wheat) protein is Thioredoxin M-type, chloroplastic.